The primary structure comprises 447 residues: Probable 3-deoxy-D-manno-octulosonic acid transferase, mitochondrial (447 aa).

Residues 1-32 (MKLGVFVYRLYRALTYGVSPLIHLHIRWRRLR) constitute a mitochondrion transit peptide. Residue glutamate 66 is the Proton acceptor of the active site. CMP contacts are provided by residues 278–279 (PR), 320–322 (LGE), and 347–350 (NLSE).

Belongs to the glycosyltransferase group 1 family. Glycosyltransferase 30 subfamily. In terms of tissue distribution, expressed in leaves, stems and flowers.

It is found in the mitochondrion. It catalyses the reaction lipid IVA (E. coli) + CMP-3-deoxy-beta-D-manno-octulosonate = alpha-Kdo-(2-&gt;6)-lipid IVA (E. coli) + CMP + H(+). The enzyme catalyses alpha-Kdo-(2-&gt;6)-lipid IVA (E. coli) + CMP-3-deoxy-beta-D-manno-octulosonate = alpha-Kdo-(2-&gt;4)-alpha-Kdo-(2-&gt;6)-lipid IVA (E. coli) + CMP + H(+). It participates in glycolipid biosynthesis; KDO(2)-lipid A biosynthesis; KDO(2)-lipid A from CMP-3-deoxy-D-manno-octulosonate and lipid IV(A): step 1/4. Its pathway is glycolipid biosynthesis; KDO(2)-lipid A biosynthesis; KDO(2)-lipid A from CMP-3-deoxy-D-manno-octulosonate and lipid IV(A): step 2/4. Its function is as follows. Involved in the biosynthesis of lipid A, a phosphorylated glycolipid that in bacteria anchors the lipopolysaccharide to the outer membrane of the cell. Catalyzes the transfer of two 3-deoxy-D-manno-octulosonate (Kdo) residues from CMP-Kdo to lipid IV(A), the tetraacyldisaccharide-1,4'-bisphosphate precursor of lipid A. Lipid A-like molecules in plants may serve as structural components of the outer membranes of mitochondria and/or chloroplasts, or may be involved in signal transduction or plant defense responses. The protein is Probable 3-deoxy-D-manno-octulosonic acid transferase, mitochondrial (KDTA) of Arabidopsis thaliana (Mouse-ear cress).